The sequence spans 355 residues: RNA 3'-terminal phosphate cyclase (355 aa).

ATP is bound by residues Gln109 and 291–295 (HLADQ). The active-site Tele-AMP-histidine intermediate is His316.

Belongs to the RNA 3'-terminal cyclase family. Type 1 subfamily.

The protein resides in the cytoplasm. It catalyses the reaction a 3'-end 3'-phospho-ribonucleotide-RNA + ATP = a 3'-end 2',3'-cyclophospho-ribonucleotide-RNA + AMP + diphosphate. Functionally, catalyzes the conversion of 3'-phosphate to a 2',3'-cyclic phosphodiester at the end of RNA. The mechanism of action of the enzyme occurs in 3 steps: (A) adenylation of the enzyme by ATP; (B) transfer of adenylate to an RNA-N3'P to produce RNA-N3'PP5'A; (C) and attack of the adjacent 2'-hydroxyl on the 3'-phosphorus in the diester linkage to produce the cyclic end product. The biological role of this enzyme is unknown but it is likely to function in some aspects of cellular RNA processing. The polypeptide is RNA 3'-terminal phosphate cyclase (Koribacter versatilis (strain Ellin345)).